The chain runs to 310 residues: Isoflavone reductase homolog P3 (310 aa).

NADP(+) is bound by residues 12–18 (GGTGYIG), R37, and K46. Residue K134 is the Proton acceptor of the active site. R138 provides a ligand contact to NADP(+).

This sequence belongs to the NmrA-type oxidoreductase family. Isoflavone reductase subfamily.

Its subcellular location is the cytoplasm. In Arabidopsis thaliana (Mouse-ear cress), this protein is Isoflavone reductase homolog P3.